Reading from the N-terminus, the 207-residue chain is Large ribosomal subunit protein uL4 (207 aa).

The interval 62–85 (KKPFKQKGTGQARQGCRRAPQYPG) is disordered.

This sequence belongs to the universal ribosomal protein uL4 family. As to quaternary structure, part of the 50S ribosomal subunit.

Its function is as follows. One of the primary rRNA binding proteins, this protein initially binds near the 5'-end of the 23S rRNA. It is important during the early stages of 50S assembly. It makes multiple contacts with different domains of the 23S rRNA in the assembled 50S subunit and ribosome. Functionally, forms part of the polypeptide exit tunnel. This is Large ribosomal subunit protein uL4 from Geobacter sp. (strain M21).